We begin with the raw amino-acid sequence, 450 residues long: Neuraminidase (450 aa).

Over 1–6 (MNPNQK) the chain is Intravirion. Residues 7-27 (IITIGSICMVVGIISLMLQIG) form a helical membrane-spanning segment. Residues 11 to 33 (GSICMVVGIISLMLQIGNIISVW) are involved in apical transport and lipid raft association. Over 28–450 (NIISVWVSHI…GAELPFTIDK (423 aa)) the chain is Virion surface. Positions 36 to 71 (HIIQTWHPNQPEPCNQSINFYTEQAAASVTLAGNSS) are hypervariable stalk region. N-linked (GlcNAc...) asparagine; by host glycosylation is found at Asn50 and Asn69. The segment at 72–450 (LCPISGWAIY…GAELPFTIDK (379 aa)) is head of neuraminidase. Disulfide bonds link Cys73–Cys398, Cys105–Cys110, Cys165–Cys212, Cys214–Cys219, Cys260–Cys273, Cys262–Cys271, Cys299–Cys316, and Cys402–Cys427. Arg99 provides a ligand contact to substrate. N-linked (GlcNAc...) asparagine; by host glycosylation is present at Asn127. Catalysis depends on Asp132, which acts as the Proton donor/acceptor. Arg133 serves as a coordination point for substrate. Asn216 carries an N-linked (GlcNAc...) asparagine; by host glycan. Residue 258–259 (EE) participates in substrate binding. Arg274 lines the substrate pocket. Ca(2+)-binding residues include Asp275, Gly279, and Asp305. Arg349 contributes to the substrate binding site. Catalysis depends on Tyr383, which acts as the Nucleophile.

Belongs to the glycosyl hydrolase 34 family. Homotetramer. Requires Ca(2+) as cofactor. Post-translationally, N-glycosylated.

Its subcellular location is the virion membrane. It localises to the host apical cell membrane. It carries out the reaction Hydrolysis of alpha-(2-&gt;3)-, alpha-(2-&gt;6)-, alpha-(2-&gt;8)- glycosidic linkages of terminal sialic acid residues in oligosaccharides, glycoproteins, glycolipids, colominic acid and synthetic substrates.. With respect to regulation, inhibited by the neuraminidase inhibitors zanamivir (Relenza) and oseltamivir (Tamiflu). These drugs interfere with the release of progeny virus from infected cells and are effective against all influenza strains. Resistance to neuraminidase inhibitors is quite rare. Functionally, catalyzes the removal of terminal sialic acid residues from viral and cellular glycoconjugates. Cleaves off the terminal sialic acids on the glycosylated HA during virus budding to facilitate virus release. Additionally helps virus spread through the circulation by further removing sialic acids from the cell surface. These cleavages prevent self-aggregation and ensure the efficient spread of the progeny virus from cell to cell. Otherwise, infection would be limited to one round of replication. Described as a receptor-destroying enzyme because it cleaves a terminal sialic acid from the cellular receptors. May facilitate viral invasion of the upper airways by cleaving the sialic acid moieties on the mucin of the airway epithelial cells. Likely to plays a role in the budding process through its association with lipid rafts during intracellular transport. May additionally display a raft-association independent effect on budding. Plays a role in the determination of host range restriction on replication and virulence. Sialidase activity in late endosome/lysosome traffic seems to enhance virus replication. This chain is Neuraminidase, found in Aves (Cat).